The chain runs to 783 residues: Lon protease (783 aa).

The 193-residue stretch at 11 to 203 folds into the Lon N-terminal domain; it reads IPVLPLRDVV…FLMGQMESEI (193 aa). ATP is bound at residue 355-362; sequence GPPGVGKT. The Lon proteolytic domain maps to 591–772; it reads SNRIGQVTGL…DEVLKVALER (182 aa). Catalysis depends on residues serine 678 and lysine 721.

It belongs to the peptidase S16 family. Homohexamer. Organized in a ring with a central cavity.

The protein resides in the cytoplasm. The enzyme catalyses Hydrolysis of proteins in presence of ATP.. ATP-dependent serine protease that mediates the selective degradation of mutant and abnormal proteins as well as certain short-lived regulatory proteins. Required for cellular homeostasis and for survival from DNA damage and developmental changes induced by stress. Degrades polypeptides processively to yield small peptide fragments that are 5 to 10 amino acids long. Binds to DNA in a double-stranded, site-specific manner. Regulates swarmer cell differentiation of V.parahaemolyticus. The sequence is that of Lon protease from Vibrio parahaemolyticus serotype O3:K6 (strain RIMD 2210633).